The sequence spans 184 residues: Ribosome-recycling factor (184 aa).

The segment at 141 to 164 (DEKNGDITEDDLRSQTEDVQKATD) is disordered.

This sequence belongs to the RRF family.

Its subcellular location is the cytoplasm. Responsible for the release of ribosomes from messenger RNA at the termination of protein biosynthesis. May increase the efficiency of translation by recycling ribosomes from one round of translation to another. The chain is Ribosome-recycling factor from Staphylococcus haemolyticus (strain JCSC1435).